The primary structure comprises 427 residues: Flotillin-1 (427 aa).

Phosphoserine occurs at positions 19, 163, and 385. Residue threonine 387 is modified to Phosphothreonine.

The protein belongs to the band 7/mec-2 family. Flotillin subfamily. Heterooligomeric complex of flotillin-1 and flotillin-2 and caveolin-1 and caveolin-2. Interacts with ECPAS.

The protein localises to the cell membrane. Its subcellular location is the endosome. The protein resides in the membrane. It is found in the caveola. It localises to the melanosome. The protein localises to the membrane raft. In terms of biological role, may act as a scaffolding protein within caveolar membranes, functionally participating in formation of caveolae or caveolae-like vesicles. This chain is Flotillin-1 (FLOT1), found in Sus scrofa (Pig).